Consider the following 514-residue polypeptide: L-Threonine dehydratase biosynthetic IlvA (514 aa).

Lys-62 bears the N6-(pyridoxal phosphate)lysine mark. Residues Asn-89, 188-192, and Ser-315 contribute to the pyridoxal 5'-phosphate site; that span reads GGGGL. 2 ACT-like domains span residues 339–411 and 434–504; these read ALLA…DLSD and RLYS…DESN.

The protein belongs to the serine/threonine dehydratase family. As to quaternary structure, homotetramer. The cofactor is pyridoxal 5'-phosphate.

The enzyme catalyses L-threonine = 2-oxobutanoate + NH4(+). It functions in the pathway amino-acid biosynthesis; L-isoleucine biosynthesis; 2-oxobutanoate from L-threonine: step 1/1. Isoleucine allosterically inhibits whereas valine allosterically activates this enzyme. Functionally, catalyzes the anaerobic formation of alpha-ketobutyrate and ammonia from threonine in a two-step reaction. The first step involved a dehydration of threonine and a production of enamine intermediates (aminocrotonate), which tautomerizes to its imine form (iminobutyrate). Both intermediates are unstable and short-lived. The second step is the nonenzymatic hydrolysis of the enamine/imine intermediates to form 2-ketobutyrate and free ammonia. In the low water environment of the cell, the second step is accelerated by RidA. The polypeptide is L-Threonine dehydratase biosynthetic IlvA (ilvA) (Salmonella typhimurium (strain LT2 / SGSC1412 / ATCC 700720)).